A 236-amino-acid chain; its full sequence is Ubiquinone biosynthesis O-methyltransferase (236 aa).

Arginine 39, glycine 59, aspartate 80, and methionine 124 together coordinate S-adenosyl-L-methionine.

This sequence belongs to the methyltransferase superfamily. UbiG/COQ3 family.

The enzyme catalyses a 3-demethylubiquinol + S-adenosyl-L-methionine = a ubiquinol + S-adenosyl-L-homocysteine + H(+). It catalyses the reaction a 3-(all-trans-polyprenyl)benzene-1,2-diol + S-adenosyl-L-methionine = a 2-methoxy-6-(all-trans-polyprenyl)phenol + S-adenosyl-L-homocysteine + H(+). It functions in the pathway cofactor biosynthesis; ubiquinone biosynthesis. Its function is as follows. O-methyltransferase that catalyzes the 2 O-methylation steps in the ubiquinone biosynthetic pathway. The chain is Ubiquinone biosynthesis O-methyltransferase from Shewanella halifaxensis (strain HAW-EB4).